Here is an 827-residue protein sequence, read N- to C-terminus: SH3-containing GRB2-like protein 3-interacting protein 1 (827 aa).

Disordered stretches follow at residues 1–115 (MMEG…ESHK), 142–205 (SIGN…GPPL), and 223–278 (IWGS…QAAT). Composition is skewed to basic and acidic residues over residues 16–32 (RKKEKDTDSTGSPDRDG) and 40–54 (PPYHSKAECAREGGK). 8 positions are modified to phosphoserine: serine 78, serine 104, serine 105, serine 107, serine 149, serine 151, serine 156, and serine 169. 2 positions are modified to phosphothreonine: threonine 180 and threonine 182. At serine 236 the chain carries Phosphoserine. Pro residues predominate over residues 245–260 (TGTPPPLPPKAVPATP). 2 positions are modified to phosphothreonine: threonine 247 and threonine 259. Residues serine 265, serine 287, serine 289, serine 300, serine 316, and serine 319 each carry the phosphoserine modification. The span at 265–276 (SPLTVATGNDQA) shows a compositional bias: polar residues. Residues 314-333 (HFSDASPEHVTPELTPREKV) are compositionally biased toward basic and acidic residues. The interval 314-523 (HFSDASPEHV…LSAATTPTVE (210 aa)) is disordered. Threonine 324, threonine 328, and threonine 335 each carry phosphothreonine. Residues 336–345 (PPAASDIPAD) show a composition bias toward low complexity. Pro residues predominate over residues 346 to 369 (SPAPGPPGPPGSAGPPGPPGPRHV). Serine 371 is modified (phosphoserine). A compositionally biased stretch (basic and acidic residues) spans 377–392 (EVQKKVAEQTFIKDDY). Position 398 is a phosphoserine (serine 398). Threonine 409 bears the Phosphothreonine mark. A compositionally biased stretch (low complexity) spans 436 to 455 (ASGASSPARPATPLVPCSST). Over residues 456–474 (TPPPPPPRPPSRPKLPPGK) the composition is skewed to pro residues. Composition is skewed to low complexity over residues 481–491 (SRPFSPPIHSS) and 498–521 (PLARAESTSSISSTNSLSAATTPT). Residue serine 485 is modified to Phosphoserine. Residues 558–826 (TLPVAAAFTE…RFAAGKYLAD (269 aa)) enclose the MHD domain. 4 interaction with DPF motifs-containing proteins regions span residues 560–566 (PVAAAFT), 592–594 (SFP), 666–669 (TYYN), and 812–817 (SLIKKR). The interval 648-827 (MPNLMTHLKK…FAAGKYLADN (180 aa)) is necessary and sufficient to mediate interaction with CANX.

In terms of assembly, interacts with proteins essential or regulating the formation of functional clathrin-coated pits. Interacts with CANX. Interacts with AP2A1. Interacts with EPS15. Interacts with SH3GL3. Interacts with AMPH. Interacts with ITSN1 (via SH3 domains). Interacts with and REPS1. In terms of tissue distribution, specifically expressed in brain (at protein level).

It localises to the membrane. The protein resides in the clathrin-coated pit. Its function is as follows. May function in clathrin-mediated endocytosis. Has both a membrane binding/tubulating activity and the ability to recruit proteins essential to the formation of functional clathrin-coated pits. Has a preference for membranes enriched in phosphatidylserine and phosphoinositides and is required for the endocytosis of the transferrin receptor. May also bind tubulin. May play a role in the regulation of energy homeostasis. This Rattus norvegicus (Rat) protein is SH3-containing GRB2-like protein 3-interacting protein 1 (Sgip1).